We begin with the raw amino-acid sequence, 508 residues long: Phytepsin (508 aa).

Positions 1-27 (MGTRGLALALLAAVLLLQTVLPAASEA) are cleaved as a signal peptide. The propeptide at 28–66 (EGLVRIALKKRPIDRNSRVATGLSGGEEQPLLSGANPLR) is activation peptide. One can recognise a Peptidase A1 domain in the interval 84–505 (YFGEIGVGTP…DYGKLRIGFA (422 aa)). D102 is a catalytic residue. 2 disulfides stabilise this stretch: C115/C121 and C280/C284. The active site involves D289. Positions 314–419 (VVSQECKTIV…NQLCNRLPSP (106 aa)) constitute a Saposin B-type domain. 4 disulfide bridges follow: C319–C413, C344–C385, C350–C382, and C427–C464. A glycan (N-linked (GlcNAc...) asparagine) is linked at N399.

This sequence belongs to the peptidase A1 family. In terms of assembly, heterodimer of two subunits (29 kDa and 11 kDa) processed from the precursor molecule. A large enzyme (32 kDa and 16 kDa) is an intermediate precursor form. Embryo and leaf.

It is found in the vacuole. It carries out the reaction Prefers hydrophobic residues Phe, Val, Ile, Leu, and Ala at P1 and P1', but also cleaves -Phe-|-Asp- and -Asp-|-Asp- bonds in 2S albumin from plant seeds.. Functionally, involved in the breakdown of propeptides of storage proteins in protein-storage vacuoles. This is Phytepsin from Hordeum vulgare (Barley).